The sequence spans 513 residues: Maturase K (513 aa).

It belongs to the intron maturase 2 family. MatK subfamily.

It is found in the plastid. Its subcellular location is the chloroplast. Its function is as follows. Usually encoded in the trnK tRNA gene intron. Probably assists in splicing its own and other chloroplast group II introns. The protein is Maturase K of Cyrilla racemiflora (Swamp titi).